Reading from the N-terminus, the 465-residue chain is Uronate isomerase (465 aa).

This sequence belongs to the metallo-dependent hydrolases superfamily. Uronate isomerase family.

It catalyses the reaction D-glucuronate = D-fructuronate. The enzyme catalyses aldehydo-D-galacturonate = keto-D-tagaturonate. Its pathway is carbohydrate metabolism; pentose and glucuronate interconversion. The polypeptide is Uronate isomerase (Bacillus velezensis (strain DSM 23117 / BGSC 10A6 / LMG 26770 / FZB42) (Bacillus amyloliquefaciens subsp. plantarum)).